Here is a 581-residue protein sequence, read N- to C-terminus: Proline--tRNA ligase (581 aa).

This sequence belongs to the class-II aminoacyl-tRNA synthetase family. ProS type 1 subfamily. Homodimer.

It localises to the cytoplasm. The enzyme catalyses tRNA(Pro) + L-proline + ATP = L-prolyl-tRNA(Pro) + AMP + diphosphate. Its function is as follows. Catalyzes the attachment of proline to tRNA(Pro) in a two-step reaction: proline is first activated by ATP to form Pro-AMP and then transferred to the acceptor end of tRNA(Pro). As ProRS can inadvertently accommodate and process non-cognate amino acids such as alanine and cysteine, to avoid such errors it has two additional distinct editing activities against alanine. One activity is designated as 'pretransfer' editing and involves the tRNA(Pro)-independent hydrolysis of activated Ala-AMP. The other activity is designated 'posttransfer' editing and involves deacylation of mischarged Ala-tRNA(Pro). The misacylated Cys-tRNA(Pro) is not edited by ProRS. In Leptothrix cholodnii (strain ATCC 51168 / LMG 8142 / SP-6) (Leptothrix discophora (strain SP-6)), this protein is Proline--tRNA ligase.